Consider the following 450-residue polypeptide: Signal recognition particle protein (450 aa).

GTP contacts are provided by residues 106 to 113, 188 to 192, and 246 to 249; these read GLQGSGKT, DTAGR, and TKLD.

Belongs to the GTP-binding SRP family. SRP54 subfamily. As to quaternary structure, part of the signal recognition particle protein translocation system, which is composed of SRP and FtsY.

The protein localises to the cytoplasm. The enzyme catalyses GTP + H2O = GDP + phosphate + H(+). Involved in targeting and insertion of nascent membrane proteins into the cytoplasmic membrane. Binds to the hydrophobic signal sequence of the ribosome-nascent chain (RNC) as it emerges from the ribosomes. The SRP-RNC complex is then targeted to the cytoplasmic membrane where it interacts with the SRP receptor FtsY. This chain is Signal recognition particle protein, found in Mycoplasma pneumoniae (strain ATCC 29342 / M129 / Subtype 1) (Mycoplasmoides pneumoniae).